A 381-amino-acid polypeptide reads, in one-letter code: O-antigen chain mannosyltransferase B (381 aa).

Belongs to the glycosyltransferase group 1 family. Glycosyltransferase 4 subfamily.

The enzyme catalyses alpha-D-mannosyl-(1-&gt;3)-N-acetyl-alpha-D-glucosaminyl-di-trans,octa-cis-undecaprenyl diphosphate + 2 GDP-alpha-D-mannose = alpha-D-mannosyl-(1-&gt;3)-alpha-D-mannosyl-(1-&gt;3)-alpha-D-mannosyl-(1-&gt;3)-N-acetyl-alpha-D-glucosaminyl-di-trans,octa-cis-undecaprenyl diphosphate + 2 GDP + 2 H(+). It functions in the pathway bacterial outer membrane biogenesis; LPS O-antigen biosynthesis. Its function is as follows. Mannosyltransferase involved in the biosynthesis of the repeat unit of the lipopolysaccharide (LPS) O-antigen region. Catalyzes the transfer of two alpha-(1-&gt;3)-linked mannose residues to the product of the WbdC enzyme during the synthesis of the adapter region. This chain is O-antigen chain mannosyltransferase B, found in Escherichia coli.